Reading from the N-terminus, the 418-residue chain is Transmembrane protease serine 11A (418 aa).

Residues 1 to 18 (MMYRTVGFGTRSRNLKPW) lie on the Cytoplasmic side of the membrane. The helical; Signal-anchor for type II membrane protein transmembrane segment at 19–39 (MIAVLIVLSLTVVAVTIGLLV) threads the bilayer. Topologically, residues 40–418 (HFLVFDQKKE…RNWIASKTGI (379 aa)) are extracellular. One can recognise an SEA domain in the interval 47 to 164 (KKEYYHGSFK…SSVQVNAMSS (118 aa)). Asparagine 153 carries N-linked (GlcNAc...) asparagine glycosylation. Residues 187–417 (IASGVIAPKA…YRNWIASKTG (231 aa)) enclose the Peptidase S1 domain. A disulfide bond links cysteine 212 and cysteine 228. Active-site charge relay system residues include histidine 227 and aspartate 272. A glycan (N-linked (GlcNAc...) asparagine) is linked at asparagine 303. Intrachain disulfides connect cysteine 337–cysteine 353 and cysteine 364–cysteine 393. The active-site Charge relay system is the serine 368.

The protein belongs to the peptidase S1 family. May interact with ZBTB17. In terms of tissue distribution, expressed in esophagus, liver, colon and lung. Down-regulated in esophagus cancers.

The protein localises to the membrane. Functionally, probable serine protease which may play a role in cellular senescence. Overexpression inhibits cell growth and induce G1 cell cycle arrest. This chain is Transmembrane protease serine 11A (TMPRSS11A), found in Homo sapiens (Human).